The chain runs to 323 residues: o-succinylbenzoate synthase (323 aa).

The active-site Proton donor is the Lys134. Asp162, Glu191, and Asp214 together coordinate Mg(2+). Catalysis depends on Lys236, which acts as the Proton acceptor.

This sequence belongs to the mandelate racemase/muconate lactonizing enzyme family. MenC type 1 subfamily. Requires a divalent metal cation as cofactor.

The catalysed reaction is (1R,6R)-6-hydroxy-2-succinyl-cyclohexa-2,4-diene-1-carboxylate = 2-succinylbenzoate + H2O. The protein operates within quinol/quinone metabolism; 1,4-dihydroxy-2-naphthoate biosynthesis; 1,4-dihydroxy-2-naphthoate from chorismate: step 4/7. It functions in the pathway quinol/quinone metabolism; menaquinone biosynthesis. Functionally, converts 2-succinyl-6-hydroxy-2,4-cyclohexadiene-1-carboxylate (SHCHC) to 2-succinylbenzoate (OSB). This is o-succinylbenzoate synthase from Pectobacterium atrosepticum (strain SCRI 1043 / ATCC BAA-672) (Erwinia carotovora subsp. atroseptica).